A 529-amino-acid chain; its full sequence is Scarecrow-like protein 13 (529 aa).

Positions 51 to 81 (ASGSLPSYDSPSVSITSGRSPFSPQGSQSCI) are enriched in polar residues. The segment at 51 to 84 (ASGSLPSYDSPSVSITSGRSPFSPQGSQSCISDL) is disordered. In terms of domain architecture, GRAS spans 146 to 525 (LLALTPQLDL…RPMATCSVWK (380 aa)). Residues 153-213 (LDLKEVLVEA…RARLEGSGSN (61 aa)) form a leucine repeat I (LRI) region. The segment at 232–297 (MSVLYEICPY…GGPPLLRVTG (66 aa)) is VHIID. A VHIID motif is present at residues 263-267 (VHIID). The leucine repeat II (LRII) stretch occupies residues 313 to 345 (LVGERLATLAQSCGVPFEFHDAIMSGCKVQREH). The PFYRE stretch occupies residues 354 to 448 (VVVNFPYVLH…QHCVARDIVN (95 aa)). The tract at residues 451-525 (ACEESERVER…RPMATCSVWK (75 aa)) is SAW.

This sequence belongs to the GRAS family. In terms of tissue distribution, expressed in roots, hypocotyls, cotyledons, shoot apex, leaves, flowers and siliques.

The protein localises to the cytoplasm. Its subcellular location is the nucleus. Functionally, probable transcription factor that acts as a positive regulator of continuous red light signals downstream of phytochrome B (phyB). Required for the regulation of hypocotyl elongation during de-etiolation. May be required to modulate phytochrome A (phyA) signal transduction in a phyB-independent way. The sequence is that of Scarecrow-like protein 13 (SCL13) from Arabidopsis thaliana (Mouse-ear cress).